The following is a 164-amino-acid chain: Large ribosomal subunit protein eL21x/eL21w (164 aa).

Belongs to the eukaryotic ribosomal protein eL21 family.

In Arabidopsis thaliana (Mouse-ear cress), this protein is Large ribosomal subunit protein eL21x/eL21w (RPL21E).